The chain runs to 152 residues: MAINRDYLGRAYELPEPYEVTRVKIREFADAISDPNPLYRDPAHAKEAGYTDVIAPPTFPIILSMEGAGQAIADPELALDFSRVVHGDQRFRYSRPLQAGDVVTCRTTITDIKSLAGNEMLTLESEIATTAGEHVVTSVTMLVVRGDAPSGT.

The MaoC-like domain maps to 7–116 (YLGRAYELPE…TTITDIKSLA (110 aa)).

This sequence belongs to the UPF0336 family.

This chain is UPF0336 protein Tfu_2666, found in Thermobifida fusca (strain YX).